A 316-amino-acid chain; its full sequence is CD276 antigen (316 aa).

Residues 1-28 (MLRGWGGPSVGVSMGTALGVLCLCLTGA) form the signal peptide. An Ig-like V-type domain is found at 29 to 139 (VEVQVSEDPV…DSAAVSLQVA (111 aa)). Residues 29–248 (VEVQVSEDPV…GQPMTFPPEA (220 aa)) are Extracellular-facing. 3 N-linked (GlcNAc...) asparagine glycosylation sites follow: asparagine 104, asparagine 189, and asparagine 215. An Ig-like C2-type domain is found at 145–238 (PSMTLEPNKD…QDAHGSVTIT (94 aa)). A disulfide bridge connects residues cysteine 165 and cysteine 220. Residues 249-269 (LWVTVGLSVCLVILLVALAFV) traverse the membrane as a helical segment. Residues 270–316 (CWRKIKQSCEEENAGAEDQDGDGEGSKTALRPLKHSENKEDDGQEIA) lie on the Cytoplasmic side of the membrane. Residues 281–292 (ENAGAEDQDGDG) show a composition bias toward acidic residues. The disordered stretch occupies residues 281–316 (ENAGAEDQDGDGEGSKTALRPLKHSENKEDDGQEIA).

It belongs to the immunoglobulin superfamily. BTN/MOG family. In terms of assembly, interacts with TREML2 and this interaction enhances T-cell activation.

The protein localises to the membrane. Its function is as follows. Modulates T-cell-mediated immune responses and the development of acute and chronic transplant rejection. May play a positive regulatory role in bone formation and has a dual role in the bone-immune interface. Induces antitumor immunity as it activates both acquired and innate immunity leading to natural killer cell and CD8 T-cell dependent killing of tumor cells. This Rattus norvegicus (Rat) protein is CD276 antigen (Cd276).